Reading from the N-terminus, the 171-residue chain is Co-chaperone protein HscB homolog (171 aa).

Residues 3–75 (SHFALFDLEP…SQRARYLLSL (73 aa)) form the J domain.

Belongs to the HscB family. In terms of assembly, interacts with HscA and stimulates its ATPase activity.

Its function is as follows. Co-chaperone involved in the maturation of iron-sulfur cluster-containing proteins. Seems to help targeting proteins to be folded toward HscA. The polypeptide is Co-chaperone protein HscB homolog (Azotobacter vinelandii).